The primary structure comprises 212 residues: Glycerol-3-phosphate acyltransferase (212 aa).

Helical transmembrane passes span 3-23 (ILLA…VVVS), 78-98 (DVAV…PVFF), 115-135 (AVHP…AFFF), and 155-177 (FLFG…LLVW).

The protein belongs to the PlsY family. As to quaternary structure, probably interacts with PlsX.

Its subcellular location is the cell inner membrane. It carries out the reaction an acyl phosphate + sn-glycerol 3-phosphate = a 1-acyl-sn-glycero-3-phosphate + phosphate. The protein operates within lipid metabolism; phospholipid metabolism. In terms of biological role, catalyzes the transfer of an acyl group from acyl-phosphate (acyl-PO(4)) to glycerol-3-phosphate (G3P) to form lysophosphatidic acid (LPA). This enzyme utilizes acyl-phosphate as fatty acyl donor, but not acyl-CoA or acyl-ACP. This Burkholderia lata (strain ATCC 17760 / DSM 23089 / LMG 22485 / NCIMB 9086 / R18194 / 383) protein is Glycerol-3-phosphate acyltransferase.